Reading from the N-terminus, the 204-residue chain is ATP-dependent Clp protease proteolytic subunit (204 aa).

The Nucleophile role is filled by Ser-101. The active site involves His-126.

This sequence belongs to the peptidase S14 family. Fourteen ClpP subunits assemble into 2 heptameric rings which stack back to back to give a disk-like structure with a central cavity, resembling the structure of eukaryotic proteasomes.

It localises to the cytoplasm. The enzyme catalyses Hydrolysis of proteins to small peptides in the presence of ATP and magnesium. alpha-casein is the usual test substrate. In the absence of ATP, only oligopeptides shorter than five residues are hydrolyzed (such as succinyl-Leu-Tyr-|-NHMec, and Leu-Tyr-Leu-|-Tyr-Trp, in which cleavage of the -Tyr-|-Leu- and -Tyr-|-Trp bonds also occurs).. Its function is as follows. Cleaves peptides in various proteins in a process that requires ATP hydrolysis. Has a chymotrypsin-like activity. Plays a major role in the degradation of misfolded proteins. The sequence is that of ATP-dependent Clp protease proteolytic subunit from Deinococcus radiodurans (strain ATCC 13939 / DSM 20539 / JCM 16871 / CCUG 27074 / LMG 4051 / NBRC 15346 / NCIMB 9279 / VKM B-1422 / R1).